Reading from the N-terminus, the 567-residue chain is ERO1-like protein 2 (567 aa).

The signal sequence occupies residues 1-22; the sequence is MKIAKGLVGLLILYKNVCQVLC. Asn-49 carries N-linked (GlcNAc...) asparagine glycosylation. Cystine bridges form between Cys-88–Cys-386, Cys-98–Cys-103, Cys-154–Cys-325, and Cys-389–Cys-392. 6 residues coordinate FAD: Arg-188, Thr-190, Trp-201, Ser-258, His-261, and Lys-290. Cys-389 functions as the Nucleophile in the catalytic mechanism. The active site involves Cys-392. Asn-546 carries N-linked (GlcNAc...) asparagine glycosylation.

The protein belongs to the EROs family. May function both as a monomer and a homodimer. FAD is required as a cofactor. Post-translationally, N-glycosylated.

The protein localises to the endoplasmic reticulum membrane. Essential oxidoreductase that oxidizes proteins in the endoplasmic reticulum to produce disulfide bonds. Acts by oxidizing directly pdi1 isomerase through a direct disulfide exchange. Does not act as a direct oxidant of folding substrate, but relies on pdi1 to transfer oxidizing equivalent. Does not oxidize all pdi related proteins, suggesting that it can discriminate between pdi1 and related proteins. Its reoxidation probably involves electron transfer to molecular oxygen via FAD. Acts independently of glutathione. May be responsible for a significant proportion of reactive oxygen species (ROS) in the cell, thereby being a source of oxidative stress. The polypeptide is ERO1-like protein 2 (ero12) (Schizosaccharomyces pombe (strain 972 / ATCC 24843) (Fission yeast)).